Reading from the N-terminus, the 216-residue chain is Ribonuclease HII (216 aa).

Positions 33 to 216 (WPVAGADEAG…RMSFRPFRQL (184 aa)) constitute an RNase H type-2 domain. A divalent metal cation contacts are provided by Asp39, Glu40, and Asp130.

Belongs to the RNase HII family. The cofactor is Mn(2+). It depends on Mg(2+) as a cofactor.

Its subcellular location is the cytoplasm. It catalyses the reaction Endonucleolytic cleavage to 5'-phosphomonoester.. Its function is as follows. Endonuclease that specifically degrades the RNA of RNA-DNA hybrids. This is Ribonuclease HII from Sinorhizobium medicae (strain WSM419) (Ensifer medicae).